The chain runs to 130 residues: Small ribosomal subunit protein uS9 (130 aa).

The protein belongs to the universal ribosomal protein uS9 family.

The chain is Small ribosomal subunit protein uS9 from Desulfosudis oleivorans (strain DSM 6200 / JCM 39069 / Hxd3) (Desulfococcus oleovorans).